The sequence spans 718 residues: MFNKVTKTFQYGQHTVVLETGEIARQASGAVLVSVEDTVVLATVVAAKKAKPGQDFFPLTVDYIEKTYAAGRIPGGFFKREGKPSEKETLTSRLIDRPLRPLFPEGFYNEVQVVIHTLSVNPEIDPDIPAMIGASAALAISGIPFNGPIGAARVAYVEGQYLLNPTASQLKSSKMDLVVAGTENAVLMVESEAQQLSEEIMLGGVVFGHEQMQAAINAIHDLVRDAGKPEWTWSPAAKNEALIAAVTAAAQEGLSAAYQIREKQARTTKLREVYAEVSAKLAEQAAAAGQDAPDGVTVDNILFDLEARLVRSQILNGEPRIDGRDTRTVRPISVRLGVLPRAHGSALFTRGETQALVVATLGTKQDEQIIDALMGEYRDRFMLHYNMPPFATGETGRIGVPKRREIGHGRLAKRSLVPVLPKPEDFQYTIRIVSEITESNGSSSMASVCGGSLAMMDAGVPITDHVAGVAMGLILENGKFAVLTDILGDEDHLGDMDFKVAGTENGITALQMDIKIQGITKEIMQVALAQAREGRLHILGKMRESLDGSRTELSAFAPRMLTIKINPEKIRDVIGKGGATIRALTEETGTQIDISDDGTIVIASVDEGQAKEAQRRIVELTADVEVGQVYDGSVLRLLDFGAIVQVLPGRDGLLHISEIANYRIANINDVLKVGQQVRVKVIEADEKGRLRLSVKAIGGIEQQQAAADVPAQAETPAE.

Residues aspartate 491 and aspartate 497 each contribute to the Mg(2+) site. One can recognise a KH domain in the interval 558-617 (PRMLTIKINPEKIRDVIGKGGATIRALTEETGTQIDISDDGTIVIASVDEGQAKEAQRRI). The S1 motif domain occupies 627–695 (GQVYDGSVLR…EKGRLRLSVK (69 aa)).

Belongs to the polyribonucleotide nucleotidyltransferase family. Requires Mg(2+) as cofactor.

It is found in the cytoplasm. The catalysed reaction is RNA(n+1) + phosphate = RNA(n) + a ribonucleoside 5'-diphosphate. Its function is as follows. Involved in mRNA degradation. Catalyzes the phosphorolysis of single-stranded polyribonucleotides processively in the 3'- to 5'-direction. The protein is Polyribonucleotide nucleotidyltransferase of Bordetella avium (strain 197N).